A 250-amino-acid polypeptide reads, in one-letter code: Pyrroloquinoline-quinone synthase (250 aa).

This sequence belongs to the PqqC family.

The enzyme catalyses 6-(2-amino-2-carboxyethyl)-7,8-dioxo-1,2,3,4,7,8-hexahydroquinoline-2,4-dicarboxylate + 3 O2 = pyrroloquinoline quinone + 2 H2O2 + 2 H2O + H(+). It participates in cofactor biosynthesis; pyrroloquinoline quinone biosynthesis. Ring cyclization and eight-electron oxidation of 3a-(2-amino-2-carboxyethyl)-4,5-dioxo-4,5,6,7,8,9-hexahydroquinoline-7,9-dicarboxylic-acid to PQQ. The chain is Pyrroloquinoline-quinone synthase from Xanthomonas oryzae pv. oryzae (strain KACC10331 / KXO85).